The sequence spans 134 residues: Small ribosomal subunit protein uS9 (134 aa).

The interval Asp109–Arg134 is disordered. Basic residues predominate over residues Pro118–Arg134.

It belongs to the universal ribosomal protein uS9 family.

This is Small ribosomal subunit protein uS9 from Methanococcus maripaludis (strain DSM 14266 / JCM 13030 / NBRC 101832 / S2 / LL).